The chain runs to 507 residues: ATP synthase subunit alpha, chloroplastic (507 aa).

Residue 170 to 177 (GDRQTGKT) coordinates ATP.

This sequence belongs to the ATPase alpha/beta chains family. As to quaternary structure, F-type ATPases have 2 components, CF(1) - the catalytic core - and CF(0) - the membrane proton channel. CF(1) has five subunits: alpha(3), beta(3), gamma(1), delta(1), epsilon(1). CF(0) has four main subunits: a, b, b' and c.

It localises to the plastid. It is found in the chloroplast thylakoid membrane. The enzyme catalyses ATP + H2O + 4 H(+)(in) = ADP + phosphate + 5 H(+)(out). In terms of biological role, produces ATP from ADP in the presence of a proton gradient across the membrane. The alpha chain is a regulatory subunit. This is ATP synthase subunit alpha, chloroplastic from Nandina domestica (Heavenly bamboo).